The primary structure comprises 245 residues: tRNA pseudouridine synthase A (245 aa).

Catalysis depends on Asp-52, which acts as the Nucleophile. A substrate-binding site is contributed by Tyr-111.

The protein belongs to the tRNA pseudouridine synthase TruA family. Homodimer.

The catalysed reaction is uridine(38/39/40) in tRNA = pseudouridine(38/39/40) in tRNA. In terms of biological role, formation of pseudouridine at positions 38, 39 and 40 in the anticodon stem and loop of transfer RNAs. The chain is tRNA pseudouridine synthase A from Rickettsia akari (strain Hartford).